The following is a 303-amino-acid chain: Ornithine carbamoyltransferase (303 aa).

Carbamoyl phosphate contacts are provided by residues 53–56 (STRT), Gln80, Arg104, and 131–134 (HPCQ). L-ornithine-binding positions include Asn162, Asp222, and 226–227 (SM). Residues 261-262 (CL) and Arg289 contribute to the carbamoyl phosphate site.

The protein belongs to the aspartate/ornithine carbamoyltransferase superfamily. OTCase family.

The protein resides in the cytoplasm. The enzyme catalyses carbamoyl phosphate + L-ornithine = L-citrulline + phosphate + H(+). It functions in the pathway amino-acid biosynthesis; L-arginine biosynthesis; L-arginine from L-ornithine and carbamoyl phosphate: step 1/3. Reversibly catalyzes the transfer of the carbamoyl group from carbamoyl phosphate (CP) to the N(epsilon) atom of ornithine (ORN) to produce L-citrulline. This chain is Ornithine carbamoyltransferase, found in Mesorhizobium japonicum (strain LMG 29417 / CECT 9101 / MAFF 303099) (Mesorhizobium loti (strain MAFF 303099)).